We begin with the raw amino-acid sequence, 729 residues long: Fatty acid oxidation complex subunit alpha (729 aa).

Residues 1-189 (MLYKGDTLYL…KIGLVDGVVK (189 aa)) form an enoyl-CoA hydratase/isomerase region. Asp296 serves as a coordination point for substrate. Positions 311–729 (ETPKQAAVLG…ARPVGDLKTA (419 aa)) are 3-hydroxyacyl-CoA dehydrogenase. NAD(+) contacts are provided by residues Met324, Asp343, 400-402 (VVE), Lys407, and Ser429. His450 functions as the For 3-hydroxyacyl-CoA dehydrogenase activity in the catalytic mechanism. Residue Asn453 participates in NAD(+) binding. Residues Asn500 and Tyr660 each contribute to the substrate site. Residues 708 to 729 (RHNEPYYPPVEPARPVGDLKTA) are disordered.

It in the N-terminal section; belongs to the enoyl-CoA hydratase/isomerase family. In the C-terminal section; belongs to the 3-hydroxyacyl-CoA dehydrogenase family. In terms of assembly, heterotetramer of two alpha chains (FadB) and two beta chains (FadA).

It catalyses the reaction a (3S)-3-hydroxyacyl-CoA + NAD(+) = a 3-oxoacyl-CoA + NADH + H(+). It carries out the reaction a (3S)-3-hydroxyacyl-CoA = a (2E)-enoyl-CoA + H2O. The catalysed reaction is a 4-saturated-(3S)-3-hydroxyacyl-CoA = a (3E)-enoyl-CoA + H2O. The enzyme catalyses (3S)-3-hydroxybutanoyl-CoA = (3R)-3-hydroxybutanoyl-CoA. It catalyses the reaction a (3Z)-enoyl-CoA = a 4-saturated (2E)-enoyl-CoA. It carries out the reaction a (3E)-enoyl-CoA = a 4-saturated (2E)-enoyl-CoA. The protein operates within lipid metabolism; fatty acid beta-oxidation. Functionally, involved in the aerobic and anaerobic degradation of long-chain fatty acids via beta-oxidation cycle. Catalyzes the formation of 3-oxoacyl-CoA from enoyl-CoA via L-3-hydroxyacyl-CoA. It can also use D-3-hydroxyacyl-CoA and cis-3-enoyl-CoA as substrate. This is Fatty acid oxidation complex subunit alpha from Escherichia coli O8 (strain IAI1).